A 207-amino-acid polypeptide reads, in one-letter code: Ribosomal RNA large subunit methyltransferase E (207 aa).

The S-adenosyl-L-methionine site is built by G56, W58, D76, D94, and D116. Residue K156 is the Proton acceptor of the active site.

The protein belongs to the class I-like SAM-binding methyltransferase superfamily. RNA methyltransferase RlmE family.

It localises to the cytoplasm. The enzyme catalyses uridine(2552) in 23S rRNA + S-adenosyl-L-methionine = 2'-O-methyluridine(2552) in 23S rRNA + S-adenosyl-L-homocysteine + H(+). Specifically methylates the uridine in position 2552 of 23S rRNA at the 2'-O position of the ribose in the fully assembled 50S ribosomal subunit. In Desulfatibacillum aliphaticivorans, this protein is Ribosomal RNA large subunit methyltransferase E.